Consider the following 129-residue polypeptide: Glycine cleavage system H protein (129 aa).

Residues 24–106 (TYTVGITEHA…YVGGWIFKIK (83 aa)) enclose the Lipoyl-binding domain. Lys65 carries the N6-lipoyllysine modification.

It belongs to the GcvH family. The glycine cleavage system is composed of four proteins: P, T, L and H. The cofactor is (R)-lipoate.

Its function is as follows. The glycine cleavage system catalyzes the degradation of glycine. The H protein shuttles the methylamine group of glycine from the P protein to the T protein. The protein is Glycine cleavage system H protein of Salmonella paratyphi B (strain ATCC BAA-1250 / SPB7).